A 178-amino-acid polypeptide reads, in one-letter code: Inorganic pyrophosphatase (178 aa).

Substrate is bound by residues lysine 30, arginine 44, and tyrosine 56. Mg(2+) contacts are provided by aspartate 66, aspartate 71, and aspartate 103. Position 140 (tyrosine 140) interacts with substrate.

Belongs to the PPase family. As to quaternary structure, homohexamer. The cofactor is Mg(2+).

The protein resides in the cytoplasm. It catalyses the reaction diphosphate + H2O = 2 phosphate + H(+). Functionally, catalyzes the hydrolysis of inorganic pyrophosphate (PPi) forming two phosphate ions. This chain is Inorganic pyrophosphatase, found in Pyrococcus horikoshii (strain ATCC 700860 / DSM 12428 / JCM 9974 / NBRC 100139 / OT-3).